Consider the following 418-residue polypeptide: Glutamyl-tRNA reductase (418 aa).

Residues 49–52 (TCNR), Ser-109, 114–116 (EPQ), and Gln-120 each bind substrate. Residue Cys-50 is the Nucleophile of the active site. 189–194 (GAGETI) is an NADP(+) binding site.

Belongs to the glutamyl-tRNA reductase family. In terms of assembly, homodimer.

It catalyses the reaction (S)-4-amino-5-oxopentanoate + tRNA(Glu) + NADP(+) = L-glutamyl-tRNA(Glu) + NADPH + H(+). Its pathway is porphyrin-containing compound metabolism; protoporphyrin-IX biosynthesis; 5-aminolevulinate from L-glutamyl-tRNA(Glu): step 1/2. Catalyzes the NADPH-dependent reduction of glutamyl-tRNA(Glu) to glutamate 1-semialdehyde (GSA). This chain is Glutamyl-tRNA reductase, found in Salmonella dublin (strain CT_02021853).